We begin with the raw amino-acid sequence, 244 residues long: tRNA pseudouridine synthase B (244 aa).

The Nucleophile role is filled by D46.

The protein belongs to the pseudouridine synthase TruB family. Type 1 subfamily.

The enzyme catalyses uridine(55) in tRNA = pseudouridine(55) in tRNA. Its function is as follows. Responsible for synthesis of pseudouridine from uracil-55 in the psi GC loop of transfer RNAs. This Bordetella avium (strain 197N) protein is tRNA pseudouridine synthase B.